The chain runs to 420 residues: Gamma-glutamyl phosphate reductase (420 aa).

It belongs to the gamma-glutamyl phosphate reductase family.

The protein resides in the cytoplasm. It carries out the reaction L-glutamate 5-semialdehyde + phosphate + NADP(+) = L-glutamyl 5-phosphate + NADPH + H(+). The protein operates within amino-acid biosynthesis; L-proline biosynthesis; L-glutamate 5-semialdehyde from L-glutamate: step 2/2. Functionally, catalyzes the NADPH-dependent reduction of L-glutamate 5-phosphate into L-glutamate 5-semialdehyde and phosphate. The product spontaneously undergoes cyclization to form 1-pyrroline-5-carboxylate. The chain is Gamma-glutamyl phosphate reductase from Alkalilimnicola ehrlichii (strain ATCC BAA-1101 / DSM 17681 / MLHE-1).